We begin with the raw amino-acid sequence, 434 residues long: Acyl transferase 15 (434 aa).

Catalysis depends on proton acceptor residues His-164 and Asp-371.

Belongs to the plant acyltransferase family.

Its function is as follows. Involved in the incorporation of ferulate into the cell wall. This chain is Acyl transferase 15, found in Oryza sativa subsp. japonica (Rice).